A 243-amino-acid chain; its full sequence is MRQKTIDAIMAHAAAEYPRECCGVVAQKSRVERYFPCRNLSAEPTEHFHLSPEDYAAAEDWGTVVAIVHSHPDATTQPSELDKAQCDATLLPWHIVSWPEGDLRTIQPRGELPLLERPFVLGHFDCWGLVMSYFRQTHGIELHDYRVDYPWWENSYPDNFYQDCWYECGFREFDGPPQEGDLVIMQVQADKWNHAGILLEGNMLLHHLYGHLSQRVPYGGYWQERTMKIVRYKDVRGNEACRK.

An MPN domain is found at 1–120; that stretch reads MRQKTIDAIM…ELPLLERPFV (120 aa). The Zn(2+) site is built by His69, His71, and Asp82. The JAMM motif signature appears at 69-82; that stretch reads HSHPDATTQPSELD. Residues 96 to 233 form the NlpC/P60 domain; the sequence is VSWPEGDLRT…ERTMKIVRYK (138 aa). The active-site Nucleophile is Cys126. The active-site Proton acceptor is the His194. His206 is a catalytic residue.

It belongs to the peptidase C40 family.

It localises to the host cytoplasm. Plays a role in tail tip complex assembly. The tail tip complex is assembled successively with three tail tip proteins J, one tail tip protein I, one tail tip protein L and one tail tip protein K. The tail tip complex interacts with tail measure protein to initiate tail tube assembly. The formation of the tail tip complex is completed by the addition of tail tip protein M, which is followed by tail tube polymerization. May be excluded form tail tip during maturation and would be absent from virions. May be involved in tail measure protein processing. This is Tail tip assembly protein K from Escherichia coli (Bacteriophage N15).